A 342-amino-acid chain; its full sequence is L-lysine 2,3-aminomutase (342 aa).

In terms of domain architecture, Radical SAM core spans 106 to 329; that stretch reads HKYHNRALLL…PKLAREIGGE (224 aa). [4Fe-4S] cluster-binding residues include Cys-120, Cys-124, and Cys-127. An N6-(pyridoxal phosphate)lysine modification is found at Lys-332.

The protein belongs to the radical SAM superfamily. KamA family. [4Fe-4S] cluster is required as a cofactor. Pyridoxal 5'-phosphate serves as cofactor.

The enzyme catalyses L-lysine = D-beta-lysine. Its function is as follows. With EpmA is involved in the beta-lysylation step of the post-translational modification of translation elongation factor P (EF-P) on 'Lys-34'. EpmB appears to act before EpmA. Displays lysine 2,3-aminomutase activity, producing (R)-beta-lysine from (S)-alpha-lysine (L-lysine). Cannot use (S)-ornithine or (R)-alpha-lysine as a substrate. The polypeptide is L-lysine 2,3-aminomutase (epmB) (Escherichia coli (strain K12)).